The sequence spans 211 residues: Glycerol-3-phosphate acyltransferase (211 aa).

The next 4 membrane-spanning stretches (helical) occupy residues A5–C25, P80–F100, F112–L132, and G138–F158.

This sequence belongs to the PlsY family. Probably interacts with PlsX.

The protein localises to the cell inner membrane. It catalyses the reaction an acyl phosphate + sn-glycerol 3-phosphate = a 1-acyl-sn-glycero-3-phosphate + phosphate. Its pathway is lipid metabolism; phospholipid metabolism. Functionally, catalyzes the transfer of an acyl group from acyl-phosphate (acyl-PO(4)) to glycerol-3-phosphate (G3P) to form lysophosphatidic acid (LPA). This enzyme utilizes acyl-phosphate as fatty acyl donor, but not acyl-CoA or acyl-ACP. The sequence is that of Glycerol-3-phosphate acyltransferase from Pectobacterium carotovorum subsp. carotovorum (strain PC1).